A 544-amino-acid chain; its full sequence is Tyrosine-protein kinase Yes (544 aa).

A lipid anchor (N-myristoyl glycine) is attached at glycine 2. An SH3 domain is found at 92–153 (GGVTFFVALY…PSNYVAPADS (62 aa)). The 98-residue stretch at 159-256 (WYFGKLSRKD…GLCYKLTTVC (98 aa)) folds into the SH2 domain. Residues 278 to 531 (LRLDVRLGQG…YIQSFLEDYF (254 aa)) enclose the Protein kinase domain. ATP contacts are provided by residues 284-292 (LGQGCFGEV) and lysine 306. Residue aspartate 397 is the Proton acceptor of the active site. Phosphotyrosine; by autocatalysis is present on tyrosine 427.

It belongs to the protein kinase superfamily. Tyr protein kinase family. SRC subfamily.

It catalyses the reaction L-tyrosyl-[protein] + ATP = O-phospho-L-tyrosyl-[protein] + ADP + H(+). The protein is Tyrosine-protein kinase Yes (yes) of Xiphophorus hellerii (Green swordtail).